The sequence spans 382 residues: MTEQRPLTIALVAGETSGDILGAGLIRALKERVPNARFVGVAGPRMQAEGCEAWYEMEELAVMGIVEVLGRLRRLLHIRADLTKRFGELKPDIFVGIDAPDFNITLEGNLKKQGIKTIHYVSPSVWAWRQKRVFKIGRATDLVLAFLPFEKAFYDKYNVPCRFIGHTMADAMPLDPDKNAARDVLGIPHDAHCLALLPGSRGAEVEMLSADFLKTAQLLRQTYPDLEIVVPLVNAKRREQFERIKAEVAPDLSVHLLDGMGREAMVASDAALLASGTAALECMLAKCPMVVGYRMKPFTFWLAKRLVKTDYVSLPNLLAGRELVKELLQEECEPQKLAAALLPLLANGKTSHAMHDTFRELHQQIRCNADEQAAQAVLELAQ.

The protein belongs to the LpxB family.

The enzyme catalyses 2-N,3-O-bis[(3R)-3-hydroxytetradecanoyl]-alpha-D-glucosaminyl 1-phosphate + UDP-2-N,3-O-bis[(3R)-3-hydroxytetradecanoyl]-alpha-D-glucosamine = lipid A disaccharide (E. coli) + UDP + H(+). It carries out the reaction a lipid X + a UDP-2-N,3-O-bis[(3R)-3-hydroxyacyl]-alpha-D-glucosamine = a lipid A disaccharide + UDP + H(+). It functions in the pathway glycolipid biosynthesis; lipid IV(A) biosynthesis; lipid IV(A) from (3R)-3-hydroxytetradecanoyl-[acyl-carrier-protein] and UDP-N-acetyl-alpha-D-glucosamine: step 5/6. Functionally, condensation of UDP-2,3-diacylglucosamine and 2,3-diacylglucosamine-1-phosphate to form lipid A disaccharide, a precursor of lipid A, a phosphorylated glycolipid that anchors the lipopolysaccharide to the outer membrane of the cell. This Escherichia coli O8 (strain IAI1) protein is Lipid-A-disaccharide synthase.